The chain runs to 340 residues: Cell growth-regulated gene 1 protein (340 aa).

This sequence belongs to the SMP-30/CGR1 family.

Functionally, involved in the cell growth regulation. This is Cell growth-regulated gene 1 protein (CGR1) from Candida albicans (strain SC5314 / ATCC MYA-2876) (Yeast).